The primary structure comprises 813 residues: LPS-assembly protein LptD (813 aa).

Positions 1-22 (MRRALRLLPLPLSIAICLPAMA) are cleaved as a signal peptide.

The protein belongs to the LptD family. In terms of assembly, component of the lipopolysaccharide transport and assembly complex. Interacts with LptE and LptA.

The protein localises to the cell outer membrane. Its function is as follows. Together with LptE, is involved in the assembly of lipopolysaccharide (LPS) at the surface of the outer membrane. The protein is LPS-assembly protein LptD of Xanthomonas axonopodis pv. citri (strain 306).